Reading from the N-terminus, the 380-residue chain is Cytochrome b (380 aa).

4 consecutive transmembrane segments (helical) span residues 34-54 (FGSL…LLAT), 78-99 (WLIR…YLHI), 114-134 (WNTG…GYVL), and 179-199 (FFAL…IHLT). Heme b-binding residues include His84 and His98. The heme b site is built by His183 and His197. His202 is an a ubiquinone binding site. A run of 4 helical transmembrane segments spans residues 227 to 247 (LKDI…ALFS), 289 to 309 (LGGV…PLLH), 321 to 341 (LSQL…WVGS), and 348 to 368 (FIII…LLFP).

The protein belongs to the cytochrome b family. The cytochrome bc1 complex contains 11 subunits: 3 respiratory subunits (MT-CYB, CYC1 and UQCRFS1), 2 core proteins (UQCRC1 and UQCRC2) and 6 low-molecular weight proteins (UQCRH/QCR6, UQCRB/QCR7, UQCRQ/QCR8, UQCR10/QCR9, UQCR11/QCR10 and a cleavage product of UQCRFS1). This cytochrome bc1 complex then forms a dimer. The cofactor is heme b.

Its subcellular location is the mitochondrion inner membrane. Component of the ubiquinol-cytochrome c reductase complex (complex III or cytochrome b-c1 complex) that is part of the mitochondrial respiratory chain. The b-c1 complex mediates electron transfer from ubiquinol to cytochrome c. Contributes to the generation of a proton gradient across the mitochondrial membrane that is then used for ATP synthesis. The protein is Cytochrome b (MT-CYB) of Uria lomvia (Thick-billed murre).